A 507-amino-acid polypeptide reads, in one-letter code: ATP synthase subunit alpha, chloroplastic (507 aa).

Position 170–177 (170–177) interacts with ATP; it reads GDRQTGKA.

Belongs to the ATPase alpha/beta chains family. F-type ATPases have 2 components, CF(1) - the catalytic core - and CF(0) - the membrane proton channel. CF(1) has five subunits: alpha(3), beta(3), gamma(1), delta(1), epsilon(1). CF(0) has four main subunits: a, b, b' and c.

It is found in the plastid. The protein localises to the chloroplast thylakoid membrane. The catalysed reaction is ATP + H2O + 4 H(+)(in) = ADP + phosphate + 5 H(+)(out). In terms of biological role, produces ATP from ADP in the presence of a proton gradient across the membrane. The alpha chain is a regulatory subunit. This is ATP synthase subunit alpha, chloroplastic from Calycanthus floridus var. glaucus (Eastern sweetshrub).